The chain runs to 604 residues: Serine/threonine-protein phosphatase 2B catalytic subunit A2 (604 aa).

Positions 21–48 (NKTERPQSSTTPIDSKASTVAAANSTAT) are disordered. Phosphothreonine is present on Thr-31. Positions 35–48 (SKASTVAAANSTAT) are enriched in low complexity. Positions 144, 146, and 172 each coordinate Fe cation. 2 residues coordinate Zn(2+): Asp-172 and Asn-204. The Proton donor role is filled by His-205. Zn(2+) contacts are provided by His-253 and His-359. The disordered stretch occupies residues 470–497 (KKLPQAGKSEATPQPATSASPKHASILD). The segment covering 480–489 (ATPQPATSAS) has biased composition (polar residues). Phosphoserine is present on residues Ser-489 and Ser-520. Residues 501–523 (RRKALRNKILAVAKVSRMYSVLR) are calmodulin-binding.

The protein belongs to the PPP phosphatase family. PP-2B subfamily. In terms of assembly, composed of two components (A and B), the A component is the catalytic subunit and the B component confers calcium sensitivity. Requires Fe(3+) as cofactor. The cofactor is Zn(2+).

The enzyme catalyses O-phospho-L-seryl-[protein] + H2O = L-seryl-[protein] + phosphate. It carries out the reaction O-phospho-L-threonyl-[protein] + H2O = L-threonyl-[protein] + phosphate. Its function is as follows. Calcium-dependent, calmodulin-stimulated protein phosphatase. This subunit may have a role in the calmodulin activation of calcineurin. The chain is Serine/threonine-protein phosphatase 2B catalytic subunit A2 (CMP2) from Saccharomyces cerevisiae (strain ATCC 204508 / S288c) (Baker's yeast).